The primary structure comprises 1402 residues: DNA-directed RNA polymerase subunit beta' (1402 aa).

Zn(2+) is bound by residues cysteine 73, cysteine 75, cysteine 88, and cysteine 91. Positions 464, 466, and 468 each coordinate Mg(2+). The Zn(2+) site is built by cysteine 812, cysteine 886, cysteine 893, and cysteine 896.

It belongs to the RNA polymerase beta' chain family. In terms of assembly, the RNAP catalytic core consists of 2 alpha, 1 beta, 1 beta' and 1 omega subunit. When a sigma factor is associated with the core the holoenzyme is formed, which can initiate transcription. Mg(2+) is required as a cofactor. It depends on Zn(2+) as a cofactor.

The catalysed reaction is RNA(n) + a ribonucleoside 5'-triphosphate = RNA(n+1) + diphosphate. In terms of biological role, DNA-dependent RNA polymerase catalyzes the transcription of DNA into RNA using the four ribonucleoside triphosphates as substrates. The protein is DNA-directed RNA polymerase subunit beta' of Rhodopseudomonas palustris (strain ATCC BAA-98 / CGA009).